The sequence spans 280 residues: Dihydropteroate synthase (280 aa).

In terms of domain architecture, Pterin-binding spans 1–265 (MSPAPVQVMG…DVRASVDAIK (265 aa)). A Mg(2+)-binding site is contributed by N13. Residues D86, N105, D177, K213, and 253-255 (RVH) each bind (7,8-dihydropterin-6-yl)methyl diphosphate.

The protein belongs to the DHPS family. As to quaternary structure, homodimer. Requires Mg(2+) as cofactor.

It catalyses the reaction (7,8-dihydropterin-6-yl)methyl diphosphate + 4-aminobenzoate = 7,8-dihydropteroate + diphosphate. It participates in cofactor biosynthesis; tetrahydrofolate biosynthesis; 7,8-dihydrofolate from 2-amino-4-hydroxy-6-hydroxymethyl-7,8-dihydropteridine diphosphate and 4-aminobenzoate: step 1/2. Functionally, catalyzes the condensation of para-aminobenzoate (pABA) with 6-hydroxymethyl-7,8-dihydropterin diphosphate (DHPt-PP) to form 7,8-dihydropteroate (H2Pte), the immediate precursor of folate derivatives. The polypeptide is Dihydropteroate synthase (folP1) (Mycobacterium bovis (strain ATCC BAA-935 / AF2122/97)).